A 1036-amino-acid chain; its full sequence is Mediator of RNA polymerase II transcription subunit 24 (1036 aa).

The protein belongs to the Mediator complex subunit 24 family. In terms of assembly, component of the Mediator complex.

The protein localises to the nucleus. Its function is as follows. Component of the Mediator complex, a coactivator involved in the regulated transcription of nearly all RNA polymerase II-dependent genes. Mediator functions as a bridge to convey information from gene-specific regulatory proteins to the basal RNA polymerase II transcription machinery. Mediator is recruited to promoters by direct interactions with regulatory proteins and serves as a scaffold for the assembly of a functional preinitiation complex with RNA polymerase II and the general transcription factors. This Anopheles gambiae (African malaria mosquito) protein is Mediator of RNA polymerase II transcription subunit 24 (MED24).